A 272-amino-acid chain; its full sequence is Adenylate kinase (272 aa).

55–60 (GAGKGT) contributes to the ATP binding site. An NMP region spans residues 75–104 (ATGDMLRSQVAKKTPLGKEAKKIMDQGGLV). AMP-binding positions include Thr76, Arg81, 102 to 104 (GLV), 131 to 134 (GFPR), and Gln138. The tract at residues 172–209 (GRLVHPASGRSYHKIFNPPKQDMKDDITGEPLIQRSDD) is LID. Residues Arg173 and 182 to 183 (SY) each bind ATP. The AMP site is built by Arg206 and Arg217. Position 245 (Gln245) interacts with ATP.

It belongs to the adenylate kinase family. AK2 subfamily. As to quaternary structure, monomer.

The protein resides in the cytoplasm. The protein localises to the cytosol. Its subcellular location is the mitochondrion intermembrane space. The enzyme catalyses AMP + ATP = 2 ADP. Its function is as follows. Catalyzes the reversible transfer of the terminal phosphate group between ATP and AMP. Plays an important role in cellular energy homeostasis and in adenine nucleotide metabolism. Adenylate kinase activity is critical for regulation of the phosphate utilization and the AMP de novo biosynthesis pathways. The sequence is that of Adenylate kinase (adk1) from Talaromyces marneffei (Penicillium marneffei).